We begin with the raw amino-acid sequence, 343 residues long: Flagellar motor switch protein FliG (343 aa).

The Part of the EHPQR-motif motif lies at 137 to 140; sequence EHPQ. An M-F-X-F motif; its intrinsic flexibility is probably coupled to flagellar rotation motif is present at residues 245–248; that stretch reads MFTF.

Belongs to the FliG family.

The protein localises to the cell inner membrane. Its subcellular location is the bacterial flagellum basal body. One of the proteins that forms a switch complex that is proposed to be located at the base of the basal body. This complex interacts with chemotaxis proteins (such as CheY) in addition to contacting components of the motor that determine the direction of flagellar rotation. Required for flagellum synthesis and motility. In H.pylori four flagellar switch proteins are encoded, FliG, FliM, FliN and FliY. The protein is Flagellar motor switch protein FliG of Helicobacter pylori (strain ATCC 700392 / 26695) (Campylobacter pylori).